Consider the following 637-residue polypeptide: 1-deoxy-D-xylulose-5-phosphate synthase (637 aa).

Residues histidine 71 and 112-114 (SHA) each bind thiamine diphosphate. Aspartate 144 contacts Mg(2+). Thiamine diphosphate contacts are provided by residues 145 to 146 (GA), asparagine 173, tyrosine 284, and glutamate 365. Asparagine 173 provides a ligand contact to Mg(2+).

The protein belongs to the transketolase family. DXPS subfamily. As to quaternary structure, homodimer. It depends on Mg(2+) as a cofactor. Requires thiamine diphosphate as cofactor.

It carries out the reaction D-glyceraldehyde 3-phosphate + pyruvate + H(+) = 1-deoxy-D-xylulose 5-phosphate + CO2. It participates in metabolic intermediate biosynthesis; 1-deoxy-D-xylulose 5-phosphate biosynthesis; 1-deoxy-D-xylulose 5-phosphate from D-glyceraldehyde 3-phosphate and pyruvate: step 1/1. Catalyzes the acyloin condensation reaction between C atoms 2 and 3 of pyruvate and glyceraldehyde 3-phosphate to yield 1-deoxy-D-xylulose-5-phosphate (DXP). The protein is 1-deoxy-D-xylulose-5-phosphate synthase of Mycobacterium ulcerans (strain Agy99).